A 138-amino-acid polypeptide reads, in one-letter code: Putative pre-16S rRNA nuclease (138 aa).

This sequence belongs to the YqgF nuclease family.

Its subcellular location is the cytoplasm. Could be a nuclease involved in processing of the 5'-end of pre-16S rRNA. The polypeptide is Putative pre-16S rRNA nuclease (Escherichia coli O7:K1 (strain IAI39 / ExPEC)).